The following is a 414-amino-acid chain: Tryptophan synthase beta chain (414 aa).

The residue at position 105 (K105) is an N6-(pyridoxal phosphate)lysine.

The protein belongs to the TrpB family. As to quaternary structure, tetramer of two alpha and two beta chains. It depends on pyridoxal 5'-phosphate as a cofactor.

It carries out the reaction (1S,2R)-1-C-(indol-3-yl)glycerol 3-phosphate + L-serine = D-glyceraldehyde 3-phosphate + L-tryptophan + H2O. It participates in amino-acid biosynthesis; L-tryptophan biosynthesis; L-tryptophan from chorismate: step 5/5. The beta subunit is responsible for the synthesis of L-tryptophan from indole and L-serine. This is Tryptophan synthase beta chain from Gloeobacter violaceus (strain ATCC 29082 / PCC 7421).